Here is a 160-residue protein sequence, read N- to C-terminus: uncharacterized protein (160 aa).

The helical transmembrane segment at 8–28 (LLFILVFISGFILFTVYSYTA) threads the bilayer.

It is found in the membrane. This is an uncharacterized protein from Escherichia coli (strain K12).